A 708-amino-acid polypeptide reads, in one-letter code: Lactotransferrin (708 aa).

The first 19 residues, 1-19, serve as a signal peptide directing secretion; sequence MKLLFLALLSLLALGPSLA. 2 consecutive Transferrin-like domains span residues 25-352 and 364-693; these read VRWC…NLKE and VVWC…NLRQ. Intrachain disulfides connect cysteine 28-cysteine 64 and cysteine 38-cysteine 55. Residue aspartate 79 coordinates Fe(3+). Residue arginine 92 is part of the active site. Residue tyrosine 111 participates in Fe(3+) binding. 5 disulfides stabilise this stretch: cysteine 134/cysteine 217, cysteine 176/cysteine 192, cysteine 179/cysteine 202, cysteine 189/cysteine 200, and cysteine 250/cysteine 264. Residue threonine 136 participates in hydrogencarbonate binding. The N-linked (GlcNAc...) asparagine glycan is linked to asparagine 139. Hydrogencarbonate-binding residues include arginine 140, alanine 142, and glycine 143. Tyrosine 211 lines the Fe(3+) pocket. Histidine 272 lines the Fe(3+) pocket. Residue serine 278 is the Nucleophile of the active site. Intrachain disulfides connect cysteine 367–cysteine 399 and cysteine 377–cysteine 390. N-linked (GlcNAc...) asparagine glycosylation is present at asparagine 385. Fe(3+) is bound by residues aspartate 414 and aspartate 452. Disulfide bonds link cysteine 476–cysteine 551, cysteine 510–cysteine 524, cysteine 521–cysteine 534, and cysteine 592–cysteine 606. Threonine 478, arginine 482, alanine 484, and glycine 485 together coordinate hydrogencarbonate. Asparagine 495 carries N-linked (GlcNAc...) asparagine glycosylation. Residue tyrosine 545 participates in Fe(3+) binding. A Fe(3+)-binding site is contributed by histidine 614.

Belongs to the transferrin family. As to quaternary structure, monomer. Found in a complex with LTF, CLU, EPPIN and SEMG1. Interacts with prey activated coagulation factor X; the interaction inhibits coagulation factor X catalytic activity. Found in a complex with MPO and LTF; interacts directly with CP, allows Fe(3+) incorporation into LTF and activation of CP ferroxidase activity. Post-translationally, N-glycosylated. Glycosylation is important for draculin anticoagulant activity. Probably also O-glycosylated. As to expression, expressed in the submaxillary gland and secreted in the saliva (at protein level).

Its subcellular location is the secreted. Transferrins are iron binding transport proteins which can bind two Fe(3+) ions in association with the binding of an anion, usually bicarbonate. Its function is as follows. Major iron-binding and multifunctional protein found in exocrine fluids such as breast milk and mucosal secretions. Has antimicrobial activity. Antimicrobial properties may include bacteriostasis, which is related to its ability to sequester free iron and thus inhibit microbial growth, as well as direct bactericidal properties leading to the release of lipopolysaccharides from the bacterial outer membrane. May have anabolic, differentiating and anti-apoptotic effects on osteoblasts and may also inhibit osteoclastogenesis, possibly playing a role in the regulation of bone growth. May interfere with the lipopolysaccharide (LPS)-stimulated TLR4 signaling. Functionally, the lactotransferrin transferrin-like domain 1 functions as a serine protease of the peptidase S60 family that cuts arginine rich regions. This function contributes to the antimicrobial activity. Shows a preferential cleavage at -Arg-Ser-Arg-Arg-|- and -Arg-Arg-Ser-Arg-|-, and of Z-Phe-Arg-|-aminomethylcoumarin sites. In terms of biological role, acts as an anticoagulant of the blood coagulation cascade of the bat's prey by inhibiting coagulation factor IX and activated coagulation factor X. The protein is Lactotransferrin of Desmodus rotundus (Vampire bat).